Here is a 542-residue protein sequence, read N- to C-terminus: Nuclear speckle splicing regulatory protein 1 (542 aa).

The tract at residues 21 to 53 (RVLQKPSVFGSDSDDDETSVSESLQREAAKKQA) is disordered. Residues Ser27, Ser31, and Ser33 each carry the phosphoserine modification. A coiled-coil region spans residues 103-172 (IHNLLKAVEI…RAAALEAHLD (70 aa)). A necessary for alternative splicing activity region spans residues 105-169 (NLLKAVEIRK…REKRAAALEA (65 aa)). The tract at residues 190-516 (AVGEEAAPKS…FAKRSNEETV (327 aa)) is disordered. Residues Lys198 and Lys209 each participate in a glycyl lysine isopeptide (Lys-Gly) (interchain with G-Cter in SUMO2) cross-link. Residues 200–217 (SFREARTVIKEEKLRGYP) are compositionally biased toward basic and acidic residues. Residues 223–232 (ESRPPQQSCV) show a composition bias toward polar residues. The span at 239 to 256 (EAEENPDADREFDDESSE) shows a compositional bias: acidic residues. Ser254 and Ser255 each carry phosphoserine. A compositionally biased stretch (basic and acidic residues) spans 257–271 (DGEKRDHKVKSRGED). Lys277 carries the post-translational modification N6-acetyllysine. Positions 277–288 (KHPKHHKNRAHS) are enriched in basic residues. Residue Lys280 forms a Glycyl lysine isopeptide (Lys-Gly) (interchain with G-Cter in SUMO2) linkage. Basic and acidic residues-rich tracts occupy residues 309–335 (RGHE…EEKS), 343–475 (SHKD…KPSH), and 485–501 (RLAE…ERPP). Residues 372-413 (KREKYSSREQERDRQRNDHDRYSEKEKKRKEKEEHTKARRER) are a coiled coil. Ser443 carries the post-translational modification Phosphoserine.

The protein belongs to the NSRP1 family. As to quaternary structure, interacts (via C-terminus) with SRSF1. Interacts (via C-terminus) with SRSF2.

The protein localises to the nucleus. It is found in the nucleus speckle. In terms of biological role, RNA-binding protein that mediates pre-mRNA alternative splicing regulation. This Mus musculus (Mouse) protein is Nuclear speckle splicing regulatory protein 1 (Nsrp1).